Reading from the N-terminus, the 500-residue chain is MNKEILAVVEAVSNEKALPREKIFEALESALATATKKKYEQEIDVRVEIDRKSGDFDTFRRWLIVEEVTMPTKEITLEAARFEDESLNVGDYVEDQIESVTFDRITTQTAKQVIVQKVREAERAMVVDQFRDQEGEIVTGVVKKVNRDNISLEIKSEGMAGNAEAVILREDMLPRENFRPGDRIRGVLYAVRPEARGAQLFVTRSKPEMLIELFRIEVPEIGEEVIEIKAAARDPGSRAKIAVKTNDKRIDPVGACVGMRGARVQAVSTELGGERIDIVLWDDNPAQFVINAMAPADVASIVVDEDKHTMDIAVEAGNLAQAIGRNGQNVRLASQLSGWELNVMTVDDLQAKHQAEAHAAIEIFTKYLDIDEEFATVLVEEGFSTLEELAYVPMKELLEIDGLDEPTVEALRERAKNALATLAQDQEASLGDNKPADDLLNLEGLDRDMAFKLAARGVCTLEDLADQGIDDLADIEGLTDEKAGELIMAARNICWFGDEA.

The S1 motif domain occupies glycine 135–serine 205. The 67-residue stretch at lysine 307 to glutamate 373 folds into the KH domain. A run of 2 repeats spans residues aspartate 369–leucine 419 and glycine 444–cysteine 494. A 2 X 51 AA approximate repeats region spans residues aspartate 369–cysteine 494.

Belongs to the NusA family. As to quaternary structure, monomer. Binds directly to the core enzyme of the DNA-dependent RNA polymerase and to nascent RNA.

It localises to the cytoplasm. Functionally, participates in both transcription termination and antitermination. This Salmonella typhimurium (strain LT2 / SGSC1412 / ATCC 700720) protein is Transcription termination/antitermination protein NusA.